The sequence spans 123 residues: DNA-directed RNA polymerase I subunit RPA12 (123 aa).

Zn(2+)-binding residues include C17, C20, C35, C38, C84, and C87. The C4-type zinc finger occupies 17-38 (CPDCGSVLPLPGIQDTVICSRC). The TFIIS-type zinc finger occupies 80-120 (IDRRCPRCGHEGMAYHTRQMRSADEGQTVFYTCINCKFQEK). The Hairpin motif lies at 103 to 104 (DE). Residues C112 and C115 each coordinate Zn(2+).

This sequence belongs to the archaeal RpoM/eukaryotic RPA12/RPB9/RPC11 RNA polymerase family. Component of the RNA polymerase I (Pol I) complex consisting of 13 subunits: a ten-subunit catalytic core composed of POLR1A/RPA1, POLR1B/RPA2, POLR1C/RPAC1, POLR1D/RPAC2, POLR1H/RPA12, POLR2E/RPABC1, POLR2F/RPABC2, POLR2H/RPABC3, POLR2K/RPABC4 and POLR2L/RPABC5; a mobile stalk subunit POLR1F/RPA43 protruding from the core and additional subunits homologous to general transcription factors POLR1E/RPA49 and POLR1G/RPA34. Part of Pol I pre-initiation complex (PIC), in which Pol I core assembles with RRN3 and promoter-bound UTBF and SL1/TIF-IB complex.

It is found in the nucleus. The protein resides in the nucleolus. In terms of biological role, core component of RNA polymerase I (Pol I), a DNA-dependent RNA polymerase which synthesizes ribosomal RNA precursors using the four ribonucleoside triphosphates as substrates. Can mediate Pol I proofreading of the nascent RNA transcript. Anchors into the Pol I active site to monitor transcription fidelity and cleave mis-incorporated 5'-ribonucleotides. The polypeptide is DNA-directed RNA polymerase I subunit RPA12 (Mus musculus (Mouse)).